The primary structure comprises 250 residues: MKICLIDETGTGDGALSVLAARWGLEHDEDNLMALVLTPEHLELRKRDEPKLGGIFVDFVGGAMAHRRKFGGGRGEAVAKAVGIKGDYLPDVVDATAGLGRDAFVLASVGCRVRMLERNPVVAALLDDGLARGYADAEIGGWLQERLQLIHASSLTALTDITPRPQVVYLDPMFPHKQKSALVKKEMRVFQSLVGPDLDADGLLEPARLLATKRVVVKRPDYAPPLANVATPNAVVTKGHRFDIYAGTPV.

Residues 101-102 (RD), 117-118 (ER), 153-154 (SS), and D171 each bind S-adenosyl-L-methionine.

It belongs to the methyltransferase superfamily. RsmJ family.

The protein localises to the cytoplasm. It carries out the reaction guanosine(1516) in 16S rRNA + S-adenosyl-L-methionine = N(2)-methylguanosine(1516) in 16S rRNA + S-adenosyl-L-homocysteine + H(+). Functionally, specifically methylates the guanosine in position 1516 of 16S rRNA. This chain is Ribosomal RNA small subunit methyltransferase J, found in Escherichia coli (strain SMS-3-5 / SECEC).